We begin with the raw amino-acid sequence, 233 residues long: Orotidine 5'-phosphate decarboxylase (233 aa).

Substrate is bound by residues Asp13, Lys35, Asp62–Thr71, Thr122, Arg182, Gln191, Gly211, and Arg212. Lys64 functions as the Proton donor in the catalytic mechanism.

The protein belongs to the OMP decarboxylase family. Type 1 subfamily. As to quaternary structure, homodimer.

The catalysed reaction is orotidine 5'-phosphate + H(+) = UMP + CO2. Its pathway is pyrimidine metabolism; UMP biosynthesis via de novo pathway; UMP from orotate: step 2/2. Its function is as follows. Catalyzes the decarboxylation of orotidine 5'-monophosphate (OMP) to uridine 5'-monophosphate (UMP). This is Orotidine 5'-phosphate decarboxylase from Pseudomonas putida (strain ATCC 47054 / DSM 6125 / CFBP 8728 / NCIMB 11950 / KT2440).